Consider the following 465-residue polypeptide: 3-isopropylmalate dehydratase large subunit (465 aa).

Residues Cys-346, Cys-406, and Cys-409 each coordinate [4Fe-4S] cluster.

This sequence belongs to the aconitase/IPM isomerase family. LeuC type 1 subfamily. In terms of assembly, heterodimer of LeuC and LeuD. It depends on [4Fe-4S] cluster as a cofactor.

It carries out the reaction (2R,3S)-3-isopropylmalate = (2S)-2-isopropylmalate. The protein operates within amino-acid biosynthesis; L-leucine biosynthesis; L-leucine from 3-methyl-2-oxobutanoate: step 2/4. Functionally, catalyzes the isomerization between 2-isopropylmalate and 3-isopropylmalate, via the formation of 2-isopropylmaleate. The polypeptide is 3-isopropylmalate dehydratase large subunit (Leptospira interrogans serogroup Icterohaemorrhagiae serovar copenhageni (strain Fiocruz L1-130)).